The sequence spans 179 residues: Large ribosomal subunit protein uL6 (179 aa).

The protein belongs to the universal ribosomal protein uL6 family. In terms of assembly, part of the 50S ribosomal subunit.

Its function is as follows. This protein binds to the 23S rRNA, and is important in its secondary structure. It is located near the subunit interface in the base of the L7/L12 stalk, and near the tRNA binding site of the peptidyltransferase center. The polypeptide is Large ribosomal subunit protein uL6 (Geotalea daltonii (strain DSM 22248 / JCM 15807 / FRC-32) (Geobacter daltonii)).